Here is a 209-residue protein sequence, read N- to C-terminus: Putative 3-methyladenine DNA glycosylase (209 aa).

Belongs to the DNA glycosylase MPG family.

The protein is Putative 3-methyladenine DNA glycosylase of Lactiplantibacillus plantarum (strain ATCC BAA-793 / NCIMB 8826 / WCFS1) (Lactobacillus plantarum).